Here is a 319-residue protein sequence, read N- to C-terminus: Acetyl-coenzyme A carboxylase carboxyl transferase subunit alpha (319 aa).

The region spanning Asn35–Asp296 is the CoA carboxyltransferase C-terminal domain.

Belongs to the AccA family. Acetyl-CoA carboxylase is a heterohexamer composed of biotin carboxyl carrier protein (AccB), biotin carboxylase (AccC) and two subunits each of ACCase subunit alpha (AccA) and ACCase subunit beta (AccD).

The protein localises to the cytoplasm. It carries out the reaction N(6)-carboxybiotinyl-L-lysyl-[protein] + acetyl-CoA = N(6)-biotinyl-L-lysyl-[protein] + malonyl-CoA. The protein operates within lipid metabolism; malonyl-CoA biosynthesis; malonyl-CoA from acetyl-CoA: step 1/1. In terms of biological role, component of the acetyl coenzyme A carboxylase (ACC) complex. First, biotin carboxylase catalyzes the carboxylation of biotin on its carrier protein (BCCP) and then the CO(2) group is transferred by the carboxyltransferase to acetyl-CoA to form malonyl-CoA. This Edwardsiella ictaluri (strain 93-146) protein is Acetyl-coenzyme A carboxylase carboxyl transferase subunit alpha.